The chain runs to 137 residues: MPNFAGTWKMRSSENFDELLKALGVNAMLRKVAVAAASKPHVEIRQDGDQFYIKTSTTVRTTEINFKVGEGFEEETVDGRKCRSLPTWENENKIHCTQTLLEGDGPKTYWTRELANDELILTFGADDVVCTRIYVRE.

Positions 21–31 match the Nuclear localization signal motif; it reads KALGVNAMLRK. An all-trans-retinoate-binding site is contributed by 132-134; sequence RIY.

This sequence belongs to the calycin superfamily. Fatty-acid binding protein (FABP) family.

The protein resides in the cytoplasm. Its function is as follows. Cytosolic CRABPs may regulate the access of retinoic acid to the nuclear retinoic acid receptors. The sequence is that of Cellular retinoic acid-binding protein 1 (Crabp1) from Mus musculus (Mouse).